The chain runs to 217 residues: 3-isopropylmalate dehydratase small subunit (217 aa).

The protein belongs to the LeuD family. LeuD type 1 subfamily. Heterodimer of LeuC and LeuD.

It carries out the reaction (2R,3S)-3-isopropylmalate = (2S)-2-isopropylmalate. Its pathway is amino-acid biosynthesis; L-leucine biosynthesis; L-leucine from 3-methyl-2-oxobutanoate: step 2/4. Catalyzes the isomerization between 2-isopropylmalate and 3-isopropylmalate, via the formation of 2-isopropylmaleate. The chain is 3-isopropylmalate dehydratase small subunit from Paraburkholderia phymatum (strain DSM 17167 / CIP 108236 / LMG 21445 / STM815) (Burkholderia phymatum).